We begin with the raw amino-acid sequence, 541 residues long: MAGAIIENMGTKKLCIVGGILLVFQIIAFLVGGLIAPGPTTAVSYMSVKCVDARKNHHKTKWFVPWGPNHCDKIRDIEEAIPREIEANDIVFSVHIPLPHMEMSPWFQFMLFILQLDIAFKLNNQIRENAEVSMDVSLAYRDDAFAEWTEMAHERVPRKLKCTFTSPKTPEHEGRYYECDVLPFMEIGSVAHKFYLLNIRLPVNEKKKINVGIGEIKDIRLVGIHQNGGFTKVWFAMKTFLTPSIFIIMVWYWRRITMMSRPPVLLEKVIFALGISMTFINIPVEWFSIGFDWTWMLLFGDIRQGIFYAMLLSFWIIFCGEHMMDQHERNHIAGYWKQVGPIAVGSFCLFIFDMCERGVQLTNPFYSIWTTDIGTELAMAFIIVAGICLCLYFLFLCFMVFQVFRNISGKQSSLPAMSKVRRLHYEGLIFRFKFLMLITLACAAMTVIFFIVSQVTEGHWKWGGVTVQVNSAFFTGIYGMWNLYVFALMFLYAPSHKNYGEDQSNGDLGVHSGEELQLTTTITHVDGPTEIYKLTRKEAQE.

Over 1–15 (MAGAIIENMGTKKLC) the chain is Cytoplasmic. A helical transmembrane segment spans residues 16–36 (IVGGILLVFQIIAFLVGGLIA). The Lumenal segment spans residues 37-232 (PGPTTAVSYM…GIHQNGGFTK (196 aa)). An interaction with Wnt proteins region spans residues 101–232 (MEMSPWFQFM…GIHQNGGFTK (132 aa)). The chain crosses the membrane as a helical span at residues 233 to 253 (VWFAMKTFLTPSIFIIMVWYW). The Cytoplasmic portion of the chain corresponds to 254–268 (RRITMMSRPPVLLEK). Residues 269–289 (VIFALGISMTFINIPVEWFSI) form a helical membrane-spanning segment. Topologically, residues 290-303 (GFDWTWMLLFGDIR) are lumenal. Residues 304–324 (QGIFYAMLLSFWIIFCGEHMM) form a helical membrane-spanning segment. Residues 325–331 (DQHERNH) are Cytoplasmic-facing. The chain crosses the membrane as a helical span at residues 332-352 (IAGYWKQVGPIAVGSFCLFIF). The Lumenal portion of the chain corresponds to 353–380 (DMCERGVQLTNPFYSIWTTDIGTELAMA). The helical transmembrane segment at 381–401 (FIIVAGICLCLYFLFLCFMVF) threads the bilayer. Over 402–431 (QVFRNISGKQSSLPAMSKVRRLHYEGLIFR) the chain is Cytoplasmic. The chain crosses the membrane as a helical span at residues 432-452 (FKFLMLITLACAAMTVIFFIV). The Lumenal portion of the chain corresponds to 453-471 (SQVTEGHWKWGGVTVQVNS). A helical membrane pass occupies residues 472–492 (AFFTGIYGMWNLYVFALMFLY). The Cytoplasmic portion of the chain corresponds to 493–541 (APSHKNYGEDQSNGDLGVHSGEELQLTTTITHVDGPTEIYKLTRKEAQE).

The protein belongs to the wntless family. As to quaternary structure, interacts with WNT3A. Interacts with WNT1, WNT3 and WNT5A.

The protein resides in the golgi apparatus membrane. It localises to the cytoplasmic vesicle membrane. The protein localises to the cell membrane. Its subcellular location is the endoplasmic reticulum membrane. It is found in the early endosome membrane. Functionally, regulates Wnt proteins sorting and secretion in a feedback regulatory mechanism. This reciprocal interaction plays a key role in the regulation of expression, subcellular location, binding and organelle-specific association of Wnt proteins. Also plays an important role in establishment of the anterior-posterior body axis formation during development. The chain is Protein wntless homolog (WLS) from Pongo abelii (Sumatran orangutan).